The sequence spans 282 residues: Nucleotide-binding protein PXO_02223 (282 aa).

5–12 serves as a coordination point for ATP; that stretch reads GLSGSGKS. 57-60 serves as a coordination point for GTP; it reads DVRS.

The protein belongs to the RapZ-like family.

Functionally, displays ATPase and GTPase activities. The chain is Nucleotide-binding protein PXO_02223 from Xanthomonas oryzae pv. oryzae (strain PXO99A).